The chain runs to 203 residues: Pyridoxal 5'-phosphate synthase subunit PdxT (203 aa).

An L-glutamine-binding site is contributed by 54–56; the sequence is GES. Cys-86 (nucleophile) is an active-site residue. Residues Arg-113 and 141–142 each bind L-glutamine; that span reads IR. Residues His-177 and Glu-179 each act as charge relay system in the active site.

It belongs to the glutaminase PdxT/SNO family. As to quaternary structure, in the presence of PdxS, forms a dodecamer of heterodimers. Only shows activity in the heterodimer.

The catalysed reaction is aldehydo-D-ribose 5-phosphate + D-glyceraldehyde 3-phosphate + L-glutamine = pyridoxal 5'-phosphate + L-glutamate + phosphate + 3 H2O + H(+). It carries out the reaction L-glutamine + H2O = L-glutamate + NH4(+). The protein operates within cofactor biosynthesis; pyridoxal 5'-phosphate biosynthesis. Catalyzes the hydrolysis of glutamine to glutamate and ammonia as part of the biosynthesis of pyridoxal 5'-phosphate. The resulting ammonia molecule is channeled to the active site of PdxS. The chain is Pyridoxal 5'-phosphate synthase subunit PdxT from Halobacterium salinarum (strain ATCC 29341 / DSM 671 / R1).